A 1238-amino-acid chain; its full sequence is Inner capsid protein VP2 (1238 aa).

Residues 1 to 35 (MSTSAKKTPESKTEDKIEPVIEQTSNDKPEPPPNK) form a disordered region. The span at 7 to 30 (KTPESKTEDKIEPVIEQTSNDKPE) shows a compositional bias: basic and acidic residues.

This sequence belongs to the turreted BTV-fold inner capsid family. As to quaternary structure, homodecamer; each decamer is made up of two conformers of VP2, called VP2A and VP2B. 12 homodecamers assemble to form an icosahedral capsid.

It is found in the virion. Inner capsid protein that self-assembles to form an icosahedral capsid with a T=2 symmetry, which consists of 120 copies of VP2, with channels at each of its five-fold vertices. This capsid constitutes the innermost concentric layer of the viral mature particle. The polypeptide is Inner capsid protein VP2 (S2) (Cryphonectria parasitica (Chestnut blight fungus)).